The sequence spans 212 residues: ECF RNA polymerase sigma factor SigD (212 aa).

The interval 49–119 is sigma-70 factor domain-2; the sequence is ETIRPIVVRY…VADAHRAAGR (71 aa). The short motif at 75 to 78 is the Polymerase core binding element; the sequence is DVAQ. The sigma-70 factor domain-4 stretch occupies residues 152–201; the sequence is NELLEILPAKQREILILRVVVGLSAEETAAAVGSTTGAVRVAQHRALQRL. Residues 176-195 constitute a DNA-binding region (H-T-H motif); sequence AEETAAAVGSTTGAVRVAQH.

The protein belongs to the sigma-70 factor family. ECF subfamily. Interacts transiently with the RNA polymerase catalytic core formed by RpoA, RpoB, RpoC and RpoZ (2 alpha, 1 beta, 1 beta' and 1 omega subunit) to form the RNA polymerase holoenzyme that can initiate transcription. Interacts (via sigma-70 factor domain 4) with RsdA.

In terms of biological role, sigma factors are initiation factors that promote the attachment of RNA polymerase to specific initiation sites and are then released. Extracytoplasmic function (ECF) sigma factors are held in an inactive form by an anti-sigma factor until released by regulated intramembrane proteolysis. In Mycobacterium bovis (strain ATCC BAA-935 / AF2122/97), this protein is ECF RNA polymerase sigma factor SigD (sigD).